Consider the following 283-residue polypeptide: Protease HtpX (283 aa).

2 helical membrane passes run 4-24 (IALF…ILSV) and 33-53 (GGIL…SLFM). Histidine 139 provides a ligand contact to Zn(2+). The active site involves glutamate 140. Position 143 (histidine 143) interacts with Zn(2+). Transmembrane regions (helical) follow at residues 147-167 (GDMV…IFLS) and 192-212 (FLVS…IAMW). Glutamate 218 is a binding site for Zn(2+).

Belongs to the peptidase M48B family. Requires Zn(2+) as cofactor.

The protein resides in the cell inner membrane. The sequence is that of Protease HtpX from Glaesserella parasuis serovar 5 (strain SH0165) (Haemophilus parasuis).